The primary structure comprises 169 residues: Der GTPase-activating protein YihI (169 aa).

Disordered regions lie at residues 1–99 (MKPS…QAEL) and 146–169 (SYDD…LRGN). The segment covering 10–19 (SKGHAKARRK) has biased composition (basic residues). Positions 20 to 30 (TREELDQEARD) are enriched in basic and acidic residues. Residues 31-40 (RKRQKKRRGH) show a composition bias toward basic residues. The segment covering 49-58 (GNTTSGSKGQ) has biased composition (polar residues). A compositionally biased stretch (acidic residues) spans 147 to 159 (YDDDEEEEEDEKQ). Basic and acidic residues predominate over residues 160 to 169 (EDMMRLLRGN).

Belongs to the YihI family. Interacts with Der.

Functionally, a GTPase-activating protein (GAP) that modifies Der/EngA GTPase function. May play a role in ribosome biogenesis. In Escherichia coli O45:K1 (strain S88 / ExPEC), this protein is Der GTPase-activating protein YihI.